We begin with the raw amino-acid sequence, 1031 residues long: Pre-mRNA-splicing factor SYF1 (1031 aa).

4 HAT repeats span residues 28–60 (HLIPSADLPVEEDLLHNPENLRSWLSYIHNVKE), 90–122 (DGLQRLVSIYERAIAVFPTSYKLWKAYYLTRQS), 214–248 (KNGSYARRAFDRALRTLPPSLHGRVWGLYLRWAEI), and 250–269 (GGDAGERVWRRYLKVDPSLT). A disordered region spans residues 346–368 (VEEKVDGEQPQVEGQEQQPQEEP). Residues 353–368 (EQPQVEGQEQQPQEEP) are compositionally biased toward low complexity. HAT repeat units follow at residues 452-487 (GEFERATATFERGLAAVVTIRDFTQIFDAYAEFSET), 610-646 (PDLEQARKIFERATKVPFKAVDELAEVWCEWAEMELR), 664-698 (PKNTKINYYDDNIPPQSRLFKSLKLWSYYSDLEES), 700-732 (GTVESTKAVYDKIMELKIANAQVIVNYATFLEE), 734-768 (KYFEESFKVYERGIELFHFPIAFEIWNIYLSKFVK), 773-807 (KKLERARDLFEQALENCPEKFCKPLYLMYAKLEEE), 845-879 (FGLPATRPIYERALESLPDKQTAEMCRRFARMERK), and 881-915 (GEIDRARAIYAHASQFCDPRIEPEFWQEWNDFEIE). Disordered stretches follow at residues 948–969 (AAASKGTEKPTDTSAQEAQDAA) and 1003–1031 (TNANGIDEGGEETGEMANPDAIVMDEDEF).

Belongs to the crooked-neck family. As to quaternary structure, associated with the spliceosome.

The protein resides in the nucleus. Functionally, involved in pre-mRNA splicing and cell cycle progression. The polypeptide is Pre-mRNA-splicing factor SYF1 (SYF1) (Cryptococcus neoformans var. neoformans serotype D (strain B-3501A) (Filobasidiella neoformans)).